The primary structure comprises 344 residues: F17a-G fimbrial adhesin (344 aa).

The signal sequence occupies residues 1–22 (MTNFYKVFLAVFILVCCNISQA). Positions 23 to 199 (AVSFIGSTEN…SLNPFTLNDT (177 aa)) are receptor-binding lectin domain. A carbohydrate is bound by residues 65-66 (AN), 110-111 (DT), and 139-142 (STQG). C75 and C132 are joined by a disulfide. The segment at 200–344 (VTSCRLLTPS…GISTFTFSYQ (145 aa)) is fimbrillin-binding domain. Residues 288–308 (LKFGPDSPVKGNENQWQLSTG) form a disordered region. Polar residues predominate over residues 299 to 308 (NENQWQLSTG).

The protein belongs to the fimbrial protein family.

The protein localises to the fimbrium. In terms of biological role, essential fimbrial adhesion factor that mediates binding to N-acetylglucosamine-containing receptors in the host intestinal microvilli, leading to colonization of the intestinal tissue, and diarrhea or septicemia. Also confers adhesiveness to laminin and basement membranes. This is F17a-G fimbrial adhesin (f17aG) from Escherichia coli.